A 356-amino-acid polypeptide reads, in one-letter code: Dihydroorotate dehydrogenase (quinone) (356 aa).

FMN-binding positions include A66–K70 and T90. Position 70 (K70) interacts with substrate. Substrate is bound at residue N115–F119. N143 and N176 together coordinate FMN. A substrate-binding site is contributed by N176. The active-site Nucleophile is the S179. Substrate is bound at residue N181. 2 residues coordinate FMN: K212 and T240. N241–T242 is a substrate binding site. Residues G264, G293, and Y314 to T315 contribute to the FMN site.

This sequence belongs to the dihydroorotate dehydrogenase family. Type 2 subfamily. Monomer. FMN is required as a cofactor.

It localises to the cell membrane. The catalysed reaction is (S)-dihydroorotate + a quinone = orotate + a quinol. It functions in the pathway pyrimidine metabolism; UMP biosynthesis via de novo pathway; orotate from (S)-dihydroorotate (quinone route): step 1/1. In terms of biological role, catalyzes the conversion of dihydroorotate to orotate with quinone as electron acceptor. The protein is Dihydroorotate dehydrogenase (quinone) (pyrD) of Mycobacterium leprae (strain TN).